Consider the following 100-residue polypeptide: RxLR effector protein PITG_18683 (100 aa).

Positions 1–22 (MRSFLYGILAFAVLARSSAVAA) are cleaved as a signal peptide. The RxLR-dEER signature appears at 43–57 (RSLRVEAQEVIQSGR). A Calmodulin-binding motif motif is present at residues 78-82 (KPDIK).

Belongs to the RxLR effector family. As to quaternary structure, interacts with the host calmodulin.

It localises to the secreted. The protein resides in the host cell. Secreted effector that associates with calmodulin to interfere with plant defense-associated calcium signaling in hosts. The sequence is that of RxLR effector protein PITG_18683 from Phytophthora infestans (strain T30-4) (Potato late blight agent).